The chain runs to 303 residues: tRNA-cytidine(32) 2-sulfurtransferase (303 aa).

Positions Ser45–Ser50 match the PP-loop motif motif. [4Fe-4S] cluster is bound by residues Cys120, Cys123, and Cys211.

It belongs to the TtcA family. In terms of assembly, homodimer. Mg(2+) is required as a cofactor. [4Fe-4S] cluster serves as cofactor.

The protein localises to the cytoplasm. It catalyses the reaction cytidine(32) in tRNA + S-sulfanyl-L-cysteinyl-[cysteine desulfurase] + AH2 + ATP = 2-thiocytidine(32) in tRNA + L-cysteinyl-[cysteine desulfurase] + A + AMP + diphosphate + H(+). Its pathway is tRNA modification. Functionally, catalyzes the ATP-dependent 2-thiolation of cytidine in position 32 of tRNA, to form 2-thiocytidine (s(2)C32). The sulfur atoms are provided by the cysteine/cysteine desulfurase (IscS) system. The chain is tRNA-cytidine(32) 2-sulfurtransferase from Methylobacillus flagellatus (strain ATCC 51484 / DSM 6875 / VKM B-1610 / KT).